Reading from the N-terminus, the 135-residue chain is Large ribosomal subunit protein uL22 (135 aa).

Belongs to the universal ribosomal protein uL22 family. As to quaternary structure, part of the 50S ribosomal subunit.

Its function is as follows. This protein binds specifically to 23S rRNA; its binding is stimulated by other ribosomal proteins, e.g. L4, L17, and L20. It is important during the early stages of 50S assembly. It makes multiple contacts with different domains of the 23S rRNA in the assembled 50S subunit and ribosome. In terms of biological role, the globular domain of the protein is located near the polypeptide exit tunnel on the outside of the subunit, while an extended beta-hairpin is found that lines the wall of the exit tunnel in the center of the 70S ribosome. This is Large ribosomal subunit protein uL22 from Malacoplasma penetrans (strain HF-2) (Mycoplasma penetrans).